A 34-amino-acid chain; its full sequence is Photosystem II reaction center protein Psb30 (34 aa).

Residues valine 5–leucine 25 traverse the membrane as a helical segment.

Belongs to the Psb30/Ycf12 family. PSII is composed of 1 copy each of membrane proteins PsbA, PsbB, PsbC, PsbD, PsbE, PsbF, PsbH, PsbI, PsbJ, PsbK, PsbL, PsbM, PsbT, PsbX, PsbY, PsbZ, Psb30/Ycf12, peripheral proteins of the oxygen-evolving complex and a large number of cofactors. It forms dimeric complexes.

The protein resides in the plastid. It localises to the chloroplast thylakoid membrane. In terms of biological role, a core subunit of photosystem II (PSII), probably helps stabilize the reaction center. This chain is Photosystem II reaction center protein Psb30, found in Tupiella akineta (Green alga).